Reading from the N-terminus, the 322-residue chain is tRNA U34 carboxymethyltransferase (322 aa).

Carboxy-S-adenosyl-L-methionine-binding positions include lysine 92, tryptophan 106, lysine 111, glycine 131, 153-155, 181-182, methionine 196, tyrosine 200, and arginine 315; these read DPS and VE.

Belongs to the class I-like SAM-binding methyltransferase superfamily. CmoB family. Homotetramer.

It catalyses the reaction carboxy-S-adenosyl-L-methionine + 5-hydroxyuridine(34) in tRNA = 5-carboxymethoxyuridine(34) in tRNA + S-adenosyl-L-homocysteine + H(+). Catalyzes carboxymethyl transfer from carboxy-S-adenosyl-L-methionine (Cx-SAM) to 5-hydroxyuridine (ho5U) to form 5-carboxymethoxyuridine (cmo5U) at position 34 in tRNAs. This Pseudoalteromonas translucida (strain TAC 125) protein is tRNA U34 carboxymethyltransferase.